Consider the following 176-residue polypeptide: Adenine phosphoribosyltransferase (176 aa).

The protein belongs to the purine/pyrimidine phosphoribosyltransferase family. In terms of assembly, homodimer.

It localises to the cytoplasm. It carries out the reaction AMP + diphosphate = 5-phospho-alpha-D-ribose 1-diphosphate + adenine. It participates in purine metabolism; AMP biosynthesis via salvage pathway; AMP from adenine: step 1/1. Catalyzes a salvage reaction resulting in the formation of AMP, that is energically less costly than de novo synthesis. This chain is Adenine phosphoribosyltransferase, found in Gluconacetobacter diazotrophicus (strain ATCC 49037 / DSM 5601 / CCUG 37298 / CIP 103539 / LMG 7603 / PAl5).